A 45-amino-acid chain; its full sequence is uncharacterized protein (45 aa).

The C2H2-type zinc finger occupies 2 to 25 (YQCLRCGGIFNKRREVVEHLLVGH).

This is an uncharacterized protein from Sulfolobus spindle-shape virus 1 (SSV1).